We begin with the raw amino-acid sequence, 777 residues long: Double zinc ribbon and ankyrin repeat-containing protein 1 (777 aa).

Over residues 161–176 the composition is skewed to basic and acidic residues; sequence QVGERTDPKTLKDLRF. Residues 161-202 are disordered; the sequence is QVGERTDPKTLKDLRFSESPLEIPAHSGGSGSRPPTRQSQSP. The segment covering 193 to 202 has biased composition (polar residues); it reads RPPTRQSQSP. Serine 201 carries the phosphoserine modification. 2 DZANK-type zinc fingers span residues 230-289 and 358-406; these read CAHC…CVVC and CSRC…GSCG. 2 ANK repeats span residues 442 to 473 and 477 to 506; these read NIPLPRSDAGTKRDIGTQTVGLFYPSGKLLAK and EIASQKQRQEKMSDHKPLLTAISPGRGYWR.

As to quaternary structure, interacts with NINL. Associates with DYNC1H1 and multiple dynein intermediate and light chains as well as actin-binding proteins.

Its subcellular location is the cytoplasm. It is found in the cytoskeleton. It localises to the microtubule organizing center. The protein localises to the centrosome. The protein resides in the cilium basal body. Functionally, involved in vesicle transport in photoreceptor cells. The protein is Double zinc ribbon and ankyrin repeat-containing protein 1 (DZANK1) of Macaca fascicularis (Crab-eating macaque).